The primary structure comprises 138 residues: Cystatin-11 (138 aa).

The N-terminal stretch at Met-1–Ala-26 is a signal peptide. Intrachain disulfides connect Cys-94/Cys-102 and Cys-115/Cys-135. N-linked (GlcNAc...) asparagine glycosylation is present at Asn-132.

This sequence belongs to the cystatin family. As to expression, detected in the epithelium and lumen of the epididymis, and in sperm (at protein level).

It localises to the secreted. In terms of biological role, has antibacterial activity against the Gram-negative bacteria E.coli. May play a role in sperm maturation and fertilization. This is Cystatin-11 (CST11) from Homo sapiens (Human).